Here is an 80-residue protein sequence, read N- to C-terminus: Cell division activator CedA (80 aa).

This sequence belongs to the CedA family.

In terms of biological role, activates the cell division inhibited by chromosomal DNA over-replication. This is Cell division activator CedA from Salmonella typhimurium (strain LT2 / SGSC1412 / ATCC 700720).